The sequence spans 243 residues: Probable transcriptional regulatory protein Tbd_2215 (243 aa).

It belongs to the TACO1 family.

The protein resides in the cytoplasm. This chain is Probable transcriptional regulatory protein Tbd_2215, found in Thiobacillus denitrificans (strain ATCC 25259 / T1).